Consider the following 441-residue polypeptide: Ribulose bisphosphate carboxylase large chain (441 aa).

2 residues coordinate substrate: N89 and T139. K141 acts as the Proton acceptor in catalysis. K143 provides a ligand contact to substrate. Residues K167, D169, and E170 each coordinate Mg(2+). K167 carries the post-translational modification N6-carboxylysine. The Proton acceptor role is filled by H260. Substrate is bound by residues R261, H293, and S345.

The protein belongs to the RuBisCO large chain family. Type I subfamily. In terms of assembly, heterohexadecamer of 8 large chains and 8 small chains; disulfide-linked. The disulfide link is formed within the large subunit homodimers. Requires Mg(2+) as cofactor. Post-translationally, the disulfide bond which can form in the large chain dimeric partners within the hexadecamer appears to be associated with oxidative stress and protein turnover.

It is found in the plastid. The protein localises to the chloroplast. It carries out the reaction 2 (2R)-3-phosphoglycerate + 2 H(+) = D-ribulose 1,5-bisphosphate + CO2 + H2O. It catalyses the reaction D-ribulose 1,5-bisphosphate + O2 = 2-phosphoglycolate + (2R)-3-phosphoglycerate + 2 H(+). In terms of biological role, ruBisCO catalyzes two reactions: the carboxylation of D-ribulose 1,5-bisphosphate, the primary event in carbon dioxide fixation, as well as the oxidative fragmentation of the pentose substrate in the photorespiration process. Both reactions occur simultaneously and in competition at the same active site. In Fouquieria splendens (Ocotillo), this protein is Ribulose bisphosphate carboxylase large chain.